A 224-amino-acid polypeptide reads, in one-letter code: Putative O-methyltransferase MUL_4520 (224 aa).

The span at 1–11 shows a compositional bias: polar residues; that stretch reads MHGTDSSSDTP. The segment at 1-20 is disordered; that stretch reads MHGTDSSSDTPGQPAPSRAE. S-adenosyl-L-methionine is bound by residues V51, E73, 75–76, S81, D99, and I100; that span reads GT. D147 contacts substrate. D149 lines the S-adenosyl-L-methionine pocket.

Belongs to the class I-like SAM-binding methyltransferase superfamily. Cation-dependent O-methyltransferase family.

The protein is Putative O-methyltransferase MUL_4520 of Mycobacterium ulcerans (strain Agy99).